An 847-amino-acid chain; its full sequence is Glucans biosynthesis glucosyltransferase H (847 aa).

Over 1 to 138 the chain is Cytoplasmic; sequence MNKTTEYIDA…KWRTVGTIRR (138 aa). The helical transmembrane segment at 139–156 threads the bilayer; that stretch reads YILLILTLAQTVVATWYM. Residues 157-193 lie on the Periplasmic side of the membrane; it reads KTILPYQGWALINPMDMVGQDIWVSFMQLLPYMLQTG. A helical transmembrane segment spans residues 194-216; that stretch reads ILILFAVLFCWVSAGFWTALMGF. The Cytoplasmic segment spans residues 217 to 511; it reads LQLLIGRDKY…LVKGMHPVHR (295 aa). A helical membrane pass occupies residues 512 to 534; sequence AVFLTGVMSYLSAPLWFMFLALS. The Periplasmic portion of the chain corresponds to 535–567; that stretch reads TALQVVHALTEPQYFLQPRQLFPVWPQWRPELA. Residues 568–590 traverse the membrane as a helical segment; it reads IALFASTMVLLFLPKLLSIMLIW. Topologically, residues 591–602 are cytoplasmic; that stretch reads CKGTKEYGGFWR. A helical membrane pass occupies residues 603 to 625; it reads VTLSLLLEVLFSVLLAPVRMLFH. The Periplasmic portion of the chain corresponds to 626-679; it reads TVFVVSAFLGWEVVWNSPQRDDDSTPWGEAFMRHGSQLLLGLVWAVGMAWLDLR. Residues 680–702 traverse the membrane as a helical segment; the sequence is FLFWLAPIVFSLILSPFVSVISS. Residues 703 to 847 are Cytoplasmic-facing; sequence RSTVGLRTKR…ALQGRTSSAG (145 aa).

This sequence belongs to the glycosyltransferase 2 family. OpgH subfamily.

It is found in the cell inner membrane. It functions in the pathway glycan metabolism; osmoregulated periplasmic glucan (OPG) biosynthesis. In terms of biological role, involved in the biosynthesis of osmoregulated periplasmic glucans (OPGs). The polypeptide is Glucans biosynthesis glucosyltransferase H (Salmonella typhi).